The chain runs to 428 residues: Phosphoribosylamine--glycine ligase (428 aa).

The region spanning 109–316 (KDFLARHNIP…LVELCLAGTQ (208 aa)) is the ATP-grasp domain. 135–196 (VRQKGAPIVI…EEFLDGEEAS (62 aa)) contributes to the ATP binding site. Mg(2+)-binding residues include E286 and N288.

Belongs to the GARS family. Mg(2+) is required as a cofactor. The cofactor is Mn(2+).

It catalyses the reaction 5-phospho-beta-D-ribosylamine + glycine + ATP = N(1)-(5-phospho-beta-D-ribosyl)glycinamide + ADP + phosphate + H(+). Its pathway is purine metabolism; IMP biosynthesis via de novo pathway; N(1)-(5-phospho-D-ribosyl)glycinamide from 5-phospho-alpha-D-ribose 1-diphosphate: step 2/2. The sequence is that of Phosphoribosylamine--glycine ligase from Yersinia pestis.